A 579-amino-acid polypeptide reads, in one-letter code: Putative ABC transporter ATP-binding protein VPA1482 (579 aa).

2 ABC transporter domains span residues 3 to 244 (IEFS…GIRE) and 299 to 533 (LEVR…ANLT). ATP-binding positions include 37-44 (GPSGSGKS) and 332-339 (GKNGSGKS).

This sequence belongs to the ABC transporter superfamily.

It localises to the cell inner membrane. Functionally, probably part of an ABC transporter complex. Responsible for energy coupling to the transport system. The polypeptide is Putative ABC transporter ATP-binding protein VPA1482 (Vibrio parahaemolyticus serotype O3:K6 (strain RIMD 2210633)).